Consider the following 325-residue polypeptide: Aldo-keto reductase family 1 member A1 (325 aa).

Alanine 2 carries the N-acetylalanine modification. Serine 4 bears the Phosphoserine mark. Residues 11–20 (GQKMPLIGLG), threonine 21, and tryptophan 22 contribute to the NADP(+) site. Phosphoserine is present on serine 38. Position 45 (aspartate 45) interacts with NADP(+). The Proton donor role is filled by tyrosine 50. N6-acetyllysine; alternate is present on lysine 127. Lysine 127 is modified (N6-succinyllysine; alternate). Residues serine 162, asparagine 163, serine 211, leucine 213, serine 215, serine 216, lysine 263, serine 264, valine 265, threonine 266, arginine 269, and asparagine 273 each coordinate NADP(+). The residue at position 211 (serine 211) is a Phosphoserine.

The protein belongs to the aldo/keto reductase family. Monomer.

Its subcellular location is the cytoplasm. The protein resides in the cytosol. It localises to the apical cell membrane. The catalysed reaction is a primary alcohol + NADP(+) = an aldehyde + NADPH + H(+). It carries out the reaction L-gulonate + NADP(+) = aldehydo-D-glucuronate + NADPH + H(+). The enzyme catalyses L-gulono-1,4-lactone + NADP(+) = D-glucurono-3,6-lactone + NADPH + H(+). It catalyses the reaction allyl alcohol + NADP(+) = acrolein + NADPH + H(+). The catalysed reaction is glycerol + NADP(+) = D-glyceraldehyde + NADPH + H(+). It carries out the reaction glycerol + NADP(+) = L-glyceraldehyde + NADPH + H(+). The enzyme catalyses hydroxyacetone + NADP(+) = methylglyoxal + NADPH + H(+). It catalyses the reaction 3-deoxyfructose + NADP(+) = 3-deoxyglucosone + NADPH + H(+). The catalysed reaction is (R)-mevalonate + NADP(+) = (R)-mevaldate + NADPH + H(+). It carries out the reaction pyridine 3-methanol + NADP(+) = pyridine-3-carbaldehyde + NADPH + H(+). The enzyme catalyses S-nitroso-CoA + NADPH + H(+) = sulfinamide-CoA + NADP(+). It catalyses the reaction S-nitrosoglutathione + NADPH + H(+) = S-(hydroxysulfenamide)glutathione + NADP(+). In terms of biological role, catalyzes the NADPH-dependent reduction of a wide variety of carbonyl-containing compounds to their corresponding alcohols. Displays enzymatic activity towards endogenous metabolites such as aromatic and aliphatic aldehydes, ketones, monosaccharides and bile acids, with a preference for negatively charged substrates, such as glucuronate and succinic semialdehyde. Plays an important role in ascorbic acid biosynthesis by catalyzing the reduction of D-glucuronic acid and D-glucurono-gamma-lactone. Functions as a detoxifiying enzyme by reducing a range of toxic aldehydes. Reduces methylglyoxal and 3-deoxyglucosone, which are present at elevated levels under hyperglycemic conditions and are cytotoxic. Involved also in the detoxification of lipid-derived aldehydes like acrolein. Plays a role in the activation of procarcinogens, such as polycyclic aromatic hydrocarbon trans-dihydrodiols, and in the metabolism of various xenobiotics and drugs. Also acts as an inhibitor of protein S-nitrosylation by mediating degradation of S-nitroso-coenzyme A (S-nitroso-CoA), a cofactor required to S-nitrosylate proteins. S-nitroso-CoA reductase activity is involved in reprogramming intermediary metabolism in renal proximal tubules, notably by inhibiting protein S-nitrosylation of isoform 2 of PKM (PKM2). Also acts as a S-nitroso-glutathione reductase by catalyzing the NADPH-dependent reduction of S-nitrosoglutathione. Displays no reductase activity towards retinoids. The sequence is that of Aldo-keto reductase family 1 member A1 from Bos taurus (Bovine).